Consider the following 66-residue polypeptide: Small ribosomal subunit protein eS30 (66 aa).

Positions M1 to K35 are disordered.

It belongs to the eukaryotic ribosomal protein eS30 family.

This is Small ribosomal subunit protein eS30 (rps30-1) from Dictyostelium discoideum (Social amoeba).